The following is a 554-amino-acid chain: 2-succinyl-5-enolpyruvyl-6-hydroxy-3-cyclohexene-1-carboxylate synthase (554 aa).

This sequence belongs to the TPP enzyme family. MenD subfamily. Homodimer. Requires Mg(2+) as cofactor. Mn(2+) serves as cofactor. The cofactor is thiamine diphosphate.

The enzyme catalyses isochorismate + 2-oxoglutarate + H(+) = 5-enolpyruvoyl-6-hydroxy-2-succinyl-cyclohex-3-ene-1-carboxylate + CO2. It functions in the pathway quinol/quinone metabolism; 1,4-dihydroxy-2-naphthoate biosynthesis; 1,4-dihydroxy-2-naphthoate from chorismate: step 2/7. Its pathway is quinol/quinone metabolism; menaquinone biosynthesis. In terms of biological role, catalyzes the thiamine diphosphate-dependent decarboxylation of 2-oxoglutarate and the subsequent addition of the resulting succinic semialdehyde-thiamine pyrophosphate anion to isochorismate to yield 2-succinyl-5-enolpyruvyl-6-hydroxy-3-cyclohexene-1-carboxylate (SEPHCHC). The polypeptide is 2-succinyl-5-enolpyruvyl-6-hydroxy-3-cyclohexene-1-carboxylate synthase (Renibacterium salmoninarum (strain ATCC 33209 / DSM 20767 / JCM 11484 / NBRC 15589 / NCIMB 2235)).